The sequence spans 248 residues: NADP-dependent 3-hydroxy acid dehydrogenase YdfG (248 aa).

NADP(+) is bound by residues 7–12 (GATAGF), 32–33 (RR), 54–55 (DV), and N81. Substrate is bound at residue S134. Residues Y147, K151, and 177–185 (PGLVGGTEF) each bind NADP(+). The active-site Proton acceptor is Y147.

It belongs to the short-chain dehydrogenases/reductases (SDR) family. In terms of assembly, homotetramer.

The enzyme catalyses 3-hydroxypropanoate + NADP(+) = 3-oxopropanoate + NADPH + H(+). It carries out the reaction L-allo-threonine + NADP(+) = aminoacetone + CO2 + NADPH. NADP-dependent dehydrogenase with broad substrate specificity acting on 3-hydroxy acids. Catalyzes the NADP-dependent oxidation of L-allo-threonine to L-2-amino-3-keto-butyrate, which is spontaneously decarboxylated into aminoacetone. Also acts on D-threonine, L-serine, D-serine, D-3-hydroxyisobutyrate, L-3-hydroxyisobutyrate, D-glycerate and L-glycerate. Able to catalyze the reduction of the malonic semialdehyde to 3-hydroxypropionic acid. YdfG is apparently supplementing RutE, the presumed malonic semialdehyde reductase involved in pyrimidine degradation since both are able to detoxify malonic semialdehyde. The protein is NADP-dependent 3-hydroxy acid dehydrogenase YdfG of Escherichia coli O157:H7.